The primary structure comprises 1199 residues: Putative mitoferrin (1199 aa).

The chain crosses the membrane as a helical span at residues Val32 to Met52. Residues Asn92, Asn171, Asn208, Asn268, Asn326, Asn353, Asn443, Asn499, Asn539, Asn649, Asn708, Asn715, and Asn723 are each glycosylated (N-linked (GlcNAc...) asparagine). Residues Gly730–Glu750 traverse the membrane as a helical segment. N-linked (GlcNAc...) asparagine glycosylation is found at Asn763 and Asn772. One copy of the Solcar 1 repeat lies at Leu792–Ile873. 2 helical membrane passes run Phe795 to Ile815 and Leu845 to Cys865. N-linked (GlcNAc...) asparagine glycosylation is found at Asn914, Asn922, Asn965, Asn1013, Asn1022, Asn1041, and Asn1056. A Solcar 2 repeat occupies Ser1109–Phe1191. A helical transmembrane segment spans residues Phe1111–Ile1131.

Belongs to the mitochondrial carrier (TC 2.A.29) family.

It is found in the mitochondrion membrane. Its function is as follows. Putative iron transporter. The sequence is that of Putative mitoferrin from Plasmodium falciparum (isolate 3D7).